A 314-amino-acid chain; its full sequence is tRNA dimethylallyltransferase 1 (314 aa).

8 to 15 provides a ligand contact to ATP; the sequence is GPTGSGKS. Substrate is bound at residue 10–15; that stretch reads TGSGKS.

Belongs to the IPP transferase family. As to quaternary structure, monomer. It depends on Mg(2+) as a cofactor.

The catalysed reaction is adenosine(37) in tRNA + dimethylallyl diphosphate = N(6)-dimethylallyladenosine(37) in tRNA + diphosphate. Functionally, catalyzes the transfer of a dimethylallyl group onto the adenine at position 37 in tRNAs that read codons beginning with uridine, leading to the formation of N6-(dimethylallyl)adenosine (i(6)A). The chain is tRNA dimethylallyltransferase 1 from Mycobacterium ulcerans (strain Agy99).